The chain runs to 86 residues: Small ribosomal subunit protein bS20 (86 aa).

The segment at 1–25 (MANIKSAIKRAKTSEKRRVANSQEK) is disordered.

It belongs to the bacterial ribosomal protein bS20 family.

Binds directly to 16S ribosomal RNA. The chain is Small ribosomal subunit protein bS20 from Exiguobacterium sp. (strain ATCC BAA-1283 / AT1b).